The following is a 191-amino-acid chain: Probable rho GDP-dissociation inhibitor (191 aa).

Positions 1–22 (MSDHENTGENTSEYQYKQPPQK) are disordered. A compositionally biased stretch (polar residues) spans 8-21 (GENTSEYQYKQPPQ).

It belongs to the Rho GDI family.

It is found in the cytoplasm. Regulates the GDP/GTP exchange reaction of the Rho proteins by inhibiting the dissociation of GDP from them, and the subsequent binding of GTP to them. In Caenorhabditis elegans, this protein is Probable rho GDP-dissociation inhibitor (rhi-1).